The chain runs to 397 residues: Cercosporin biosynthesis regulatory protein CTB8 (397 aa).

Residues 26–53 (CTHCSSQKIRCTKERPACARCVNKGLLC) constitute a DNA-binding region (zn(2)-C6 fungal-type). Disordered regions lie at residues 63–90 (TRRHSVRATPEPETTISNAPTSSVAPDS) and 173–198 (AEASTRPSSSSSPPSQRSDGGRATTH). Polar residues predominate over residues 74–87 (PETTISNAPTSSVA). Over residues 179 to 197 (PSSSSSPPSQRSDGGRATT) the composition is skewed to low complexity.

The protein localises to the nucleus. In terms of biological role, transcription regulator of the gene cluster that mediates the biosynthesis of cercosporin, a light-activated, non-host-selective toxin. The perylenequinone chromophore of cercosporin absorbs light energy to attain an electronically-activated triplet state and produces active oxygen species such as the hydroxyl radical, superoxide, hydrogen peroxide or singlet oxygen upon reaction with oxygen molecules. These reactive oxygen species cause damage to various cellular components including lipids, proteins and nucleic acids. This is Cercosporin biosynthesis regulatory protein CTB8 from Cercospora beticola (Sugarbeet leaf spot fungus).